We begin with the raw amino-acid sequence, 194 residues long: Ribosome maturation factor RimM (194 aa).

A PRC barrel domain is found at 92-190 (DDGYYDHELI…ALVVTPPEGL (99 aa)).

The protein belongs to the RimM family. Binds ribosomal protein uS19.

It localises to the cytoplasm. An accessory protein needed during the final step in the assembly of 30S ribosomal subunit, possibly for assembly of the head region. Essential for efficient processing of 16S rRNA. May be needed both before and after RbfA during the maturation of 16S rRNA. It has affinity for free ribosomal 30S subunits but not for 70S ribosomes. The sequence is that of Ribosome maturation factor RimM from Corynebacterium urealyticum (strain ATCC 43042 / DSM 7109).